The chain runs to 355 residues: Natterin-1 (355 aa).

The N-terminal stretch at 1–18 (MIPSVLLVTLLLLSWTSA) is a signal peptide. Residues 19–27 (EKDLKVRVA) constitute a propeptide that is removed on maturation.

It belongs to the natterin family. Post-translationally, contains 4 disulfide bonds. In terms of tissue distribution, expressed by the venom gland.

It localises to the secreted. Its activity is regulated as follows. Inhibited by tissue-kallikrein inhibitor TKI and trasylol. Plasma kallikrein inhibitor PKSI527 and classical inhibitors of serine-, metallo-, thiol- or aspartate-peptidases evokes a minor inhibition of the peptide digestion. Functionally, shows nociceptive, edema-inducing and kininogenase activity with release of kallidin from low molecular weight kininogen. The cleavage occurs at Met-Lys bonds. This is Natterin-1 from Thalassophryne nattereri (Copper Joe toadfish).